A 215-amino-acid chain; its full sequence is Large ribosomal subunit protein uL4 (215 aa).

The disordered stretch occupies residues 46 to 72 (TAKSKNRAEVSGGGRKPWAQKGGGRAR). Over residues 56-71 (SGGGRKPWAQKGGGRA) the composition is skewed to gly residues.

It belongs to the universal ribosomal protein uL4 family. Part of the 50S ribosomal subunit.

One of the primary rRNA binding proteins, this protein initially binds near the 5'-end of the 23S rRNA. It is important during the early stages of 50S assembly. It makes multiple contacts with different domains of the 23S rRNA in the assembled 50S subunit and ribosome. Functionally, forms part of the polypeptide exit tunnel. This is Large ribosomal subunit protein uL4 from Helicobacter pylori (strain J99 / ATCC 700824) (Campylobacter pylori J99).